Consider the following 380-residue polypeptide: Cytochrome b (380 aa).

Transmembrane regions (helical) follow at residues 34 to 54 (FGSLLGICLATQILTGLLLAA), 78 to 99 (WLIRNLHANGASFFFICIYLHI), 114 to 134 (WNTGVILLLTLMATAFVGYVL), and 179 to 199 (FFTLHFLLPFMIMGLTLIHLT). Residues H84 and H98 each contribute to the heme b site. Residues H183 and H197 each contribute to the heme b site. Position 202 (H202) interacts with a ubiquinone. 4 consecutive transmembrane segments (helical) span residues 227–247 (LKDTLGFMFMLLPLMTLALFS), 289–309 (LGGVLALAASVLILFLAPLLH), 321–341 (LFQLLFWTLTANLLILTWVGS), and 348–368 (FIIIGQLASLTYFTILLILFP).

This sequence belongs to the cytochrome b family. The cytochrome bc1 complex contains 11 subunits: 3 respiratory subunits (MT-CYB, CYC1 and UQCRFS1), 2 core proteins (UQCRC1 and UQCRC2) and 6 low-molecular weight proteins (UQCRH/QCR6, UQCRB/QCR7, UQCRQ/QCR8, UQCR10/QCR9, UQCR11/QCR10 and a cleavage product of UQCRFS1). This cytochrome bc1 complex then forms a dimer. It depends on heme b as a cofactor.

The protein resides in the mitochondrion inner membrane. Functionally, component of the ubiquinol-cytochrome c reductase complex (complex III or cytochrome b-c1 complex) that is part of the mitochondrial respiratory chain. The b-c1 complex mediates electron transfer from ubiquinol to cytochrome c. Contributes to the generation of a proton gradient across the mitochondrial membrane that is then used for ATP synthesis. The polypeptide is Cytochrome b (MT-CYB) (Grus nigricollis (Black-necked crane)).